A 614-amino-acid chain; its full sequence is Probable glycerol-3-phosphate dehydrogenase (614 aa).

57–85 is an FAD binding site; it reads DLVVVGGGSTGAGCALDGATRGLKVALVD. The segment at 595 to 614 is disordered; that stretch reads MECPEEKRHRGERRLPPQEK. Basic and acidic residues predominate over residues 598-614; it reads PEEKRHRGERRLPPQEK.

Belongs to the FAD-dependent glycerol-3-phosphate dehydrogenase family. Requires FAD as cofactor.

It is found in the cytoplasm. The catalysed reaction is a quinone + sn-glycerol 3-phosphate = dihydroxyacetone phosphate + a quinol. It participates in polyol metabolism; glycerol degradation via glycerol kinase pathway; glycerone phosphate from sn-glycerol 3-phosphate (anaerobic route): step 1/1. The protein is Probable glycerol-3-phosphate dehydrogenase of Encephalitozoon cuniculi (strain GB-M1) (Microsporidian parasite).